The following is a 138-amino-acid chain: Small ribosomal subunit protein bS6 (138 aa).

The segment at Ser-100–Asp-138 is disordered. A compositionally biased stretch (acidic residues) spans Asp-121 to Asp-131.

Belongs to the bacterial ribosomal protein bS6 family.

Binds together with bS18 to 16S ribosomal RNA. In Thioalkalivibrio sulfidiphilus (strain HL-EbGR7), this protein is Small ribosomal subunit protein bS6.